A 349-amino-acid polypeptide reads, in one-letter code: Ethyl acetate hydrolase (349 aa).

Residues 67 to 300 form the AB hydrolase-1 domain; it reads YIGEGRALDP…SHDQFFTVDD (234 aa). The active-site Nucleophile is the Ser139. Catalysis depends on residues Asp293 and His322.

The protein belongs to the AB hydrolase superfamily. Acetyl esterase family. Homodimer.

It catalyses the reaction ethyl acetate + H2O = ethanol + acetate + H(+). In terms of biological role, esterase that catalyzes the hydrolysis of ethyl acetate. Involved in the degradation of short chain methyl ketones (MEK) such as 2-butanone and 2-hexanone. In vitro, can also hydrolyze vinyl acetate, 4-nitrophenyl acetate, methyl acetate, propyl acetate, benzyl acetate and methyl propionate. The highest activities are obtained with acetic acid esters, but the alcohol group also plays an important role, as compounds with two carbon atoms in the alcohol moiety, i.e., vinyl and ethyl acetate, are by far the preferred substrates. The polypeptide is Ethyl acetate hydrolase (Pseudomonas veronii).